The primary structure comprises 257 residues: UPF0246 protein LPC_0782 (257 aa).

This sequence belongs to the UPF0246 family.

The chain is UPF0246 protein LPC_0782 from Legionella pneumophila (strain Corby).